A 338-amino-acid chain; its full sequence is tRNA N6-adenosine threonylcarbamoyltransferase (338 aa).

2 residues coordinate Fe cation: H111 and H115. Substrate-binding positions include 134-138 (LVSGG), D167, G180, and N272. D300 contacts Fe cation.

This sequence belongs to the KAE1 / TsaD family. Fe(2+) serves as cofactor.

The protein resides in the cytoplasm. It catalyses the reaction L-threonylcarbamoyladenylate + adenosine(37) in tRNA = N(6)-L-threonylcarbamoyladenosine(37) in tRNA + AMP + H(+). Its function is as follows. Required for the formation of a threonylcarbamoyl group on adenosine at position 37 (t(6)A37) in tRNAs that read codons beginning with adenine. Is involved in the transfer of the threonylcarbamoyl moiety of threonylcarbamoyl-AMP (TC-AMP) to the N6 group of A37, together with TsaE and TsaB. TsaD likely plays a direct catalytic role in this reaction. This is tRNA N6-adenosine threonylcarbamoyltransferase from Shewanella denitrificans (strain OS217 / ATCC BAA-1090 / DSM 15013).